We begin with the raw amino-acid sequence, 370 residues long: 2-Hydroxyacid oxidase 1 (370 aa).

Residues 1 to 365 (MLPRLVCISD…DKTLVRKNPL (365 aa)) form the FMN hydroxy acid dehydrogenase domain. Residue Y26 coordinates glyoxylate. FMN-binding positions include 79–81 (ATA), S108, and Q130. Y132 is a glyoxylate binding site. T158 lines the FMN pocket. R167 serves as a coordination point for glyoxylate. Position 184 is an N6-succinyllysine (K184). A phosphoserine mark is found at S194 and S230. Positions 236 and 258 each coordinate FMN. Glyoxylate is bound by residues H260 and R263. The active-site Proton acceptor is H260. FMN is bound by residues 291–295 (DGGVR) and 314–315 (GR). The Microbody targeting signal motif lies at 368 to 370 (SKI).

This sequence belongs to the FMN-dependent alpha-hydroxy acid dehydrogenase family. Homotetramer. FMN serves as cofactor. As to expression, liver.

It localises to the peroxisome matrix. It catalyses the reaction a (2S)-2-hydroxycarboxylate + O2 = a 2-oxocarboxylate + H2O2. It carries out the reaction glycolate + O2 = glyoxylate + H2O2. The catalysed reaction is glyoxylate + O2 + H2O = oxalate + H2O2 + H(+). The enzyme catalyses 2-hydroxyhexadecanoate + O2 = 2-oxohexadecanoate + H2O2. It catalyses the reaction 2-hydroxyoctanoate + O2 = 2-oxooctanoate + H2O2. It functions in the pathway amino-acid biosynthesis; glycine biosynthesis. Broad substrate specificity (S)-2-hydroxy-acid oxidase that preferentially oxidizes glycolate. The glyoxylate produced by the oxidation of glycolate can then be utilized by alanine-glyoxylate aminotransferase for the peroxisomal synthesis of glycine; this pathway appears to be an important step for the detoxification of glyoxylate which, if allowed to accumulate, may be metabolized to oxalate with formation of kidney stones. Can also catalyze the oxidation glyoxylate, and long chain hydroxyacids such as 2-hydroxyhexadecanoate and 2-hydroxyoctanoate. Active in vitro with the artificial electron acceptor 2,6-dichlorophenolindophenol (DCIP), but O2 is believed to be the physiological electron acceptor, leading to the production of H2O2. The protein is 2-Hydroxyacid oxidase 1 of Mus musculus (Mouse).